We begin with the raw amino-acid sequence, 273 residues long: Dermonecrotic toxin LdSicTox-alphaIB3avi (273 aa).

His-5 is a catalytic residue. Residues Glu-25 and Asp-27 each contribute to the Mg(2+) site. His-41 functions as the Nucleophile in the catalytic mechanism. Intrachain disulfides connect Cys-45–Cys-51 and Cys-47–Cys-190. Asp-85 lines the Mg(2+) pocket.

This sequence belongs to the arthropod phospholipase D family. Class II subfamily. Requires Mg(2+) as cofactor. As to expression, expressed by the venom gland.

Its subcellular location is the secreted. It catalyses the reaction an N-(acyl)-sphingosylphosphocholine = an N-(acyl)-sphingosyl-1,3-cyclic phosphate + choline. The catalysed reaction is an N-(acyl)-sphingosylphosphoethanolamine = an N-(acyl)-sphingosyl-1,3-cyclic phosphate + ethanolamine. The enzyme catalyses a 1-acyl-sn-glycero-3-phosphocholine = a 1-acyl-sn-glycero-2,3-cyclic phosphate + choline. It carries out the reaction a 1-acyl-sn-glycero-3-phosphoethanolamine = a 1-acyl-sn-glycero-2,3-cyclic phosphate + ethanolamine. Dermonecrotic toxins cleave the phosphodiester linkage between the phosphate and headgroup of certain phospholipids (sphingolipid and lysolipid substrates), forming an alcohol (often choline) and a cyclic phosphate. This toxin acts on sphingomyelin (SM). It may also act on ceramide phosphoethanolamine (CPE), lysophosphatidylcholine (LPC) and lysophosphatidylethanolamine (LPE), but not on lysophosphatidylserine (LPS), and lysophosphatidylglycerol (LPG). It acts by transphosphatidylation, releasing exclusively cyclic phosphate products as second products. Induces dermonecrosis, hemolysis, increased vascular permeability, edema, inflammatory response, and platelet aggregation. The protein is Dermonecrotic toxin LdSicTox-alphaIB3avi of Loxosceles deserta (Desert recluse spider).